We begin with the raw amino-acid sequence, 332 residues long: Cell division protein ZipA (332 aa).

Over Met-1 to Arg-6 the chain is Periplasmic. A helical transmembrane segment spans residues Leu-7 to Thr-27. Residues Ser-28–Ala-332 are Cytoplasmic-facing. The segment covering Pro-40 to Thr-51 has biased composition (basic and acidic residues). The segment at Pro-40–Glu-189 is disordered. A compositionally biased stretch (low complexity) spans Ser-76–Asp-88. Residues Ala-93–Phe-105 are compositionally biased toward basic and acidic residues.

Belongs to the ZipA family. Interacts with FtsZ via their C-terminal domains.

It is found in the cell inner membrane. Essential cell division protein that stabilizes the FtsZ protofilaments by cross-linking them and that serves as a cytoplasmic membrane anchor for the Z ring. Also required for the recruitment to the septal ring of downstream cell division proteins. In Pectobacterium atrosepticum (strain SCRI 1043 / ATCC BAA-672) (Erwinia carotovora subsp. atroseptica), this protein is Cell division protein ZipA.